A 247-amino-acid chain; its full sequence is Proteasome subunit alpha (247 aa).

Belongs to the peptidase T1A family. As to quaternary structure, the 20S proteasome core is composed of 14 alpha and 14 beta subunits that assemble into four stacked heptameric rings, resulting in a barrel-shaped structure. The two inner rings, each composed of seven catalytic beta subunits, are sandwiched by two outer rings, each composed of seven alpha subunits. The catalytic chamber with the active sites is on the inside of the barrel. Has a gated structure, the ends of the cylinder being occluded by the N-termini of the alpha-subunits. Is capped at one or both ends by the proteasome regulatory ATPase, PAN.

It localises to the cytoplasm. With respect to regulation, the formation of the proteasomal ATPase PAN-20S proteasome complex, via the docking of the C-termini of PAN into the intersubunit pockets in the alpha-rings, triggers opening of the gate for substrate entry. Interconversion between the open-gate and close-gate conformations leads to a dynamic regulation of the 20S proteasome proteolysis activity. Component of the proteasome core, a large protease complex with broad specificity involved in protein degradation. This Methanosarcina acetivorans (strain ATCC 35395 / DSM 2834 / JCM 12185 / C2A) protein is Proteasome subunit alpha.